The chain runs to 266 residues: Glucosamine-6-phosphate deaminase (266 aa).

The Proton acceptor; for enolization step role is filled by Asp72. Catalysis depends on Asp141, which acts as the For ring-opening step. Residue His143 is the Proton acceptor; for ring-opening step of the active site. The active-site For ring-opening step is Glu148.

The protein belongs to the glucosamine/galactosamine-6-phosphate isomerase family. NagB subfamily. In terms of assembly, homohexamer.

It catalyses the reaction alpha-D-glucosamine 6-phosphate + H2O = beta-D-fructose 6-phosphate + NH4(+). The protein operates within amino-sugar metabolism; N-acetylneuraminate degradation; D-fructose 6-phosphate from N-acetylneuraminate: step 5/5. With respect to regulation, allosterically activated by N-acetylglucosamine 6-phosphate (GlcNAc6P). Catalyzes the reversible isomerization-deamination of glucosamine 6-phosphate (GlcN6P) to form fructose 6-phosphate (Fru6P) and ammonium ion. The polypeptide is Glucosamine-6-phosphate deaminase (Aliivibrio salmonicida (strain LFI1238) (Vibrio salmonicida (strain LFI1238))).